The following is a 328-amino-acid chain: DNA-directed RNA polymerase subunit alpha (328 aa).

Residues 1–231 form an alpha N-terminal domain (alpha-NTD) region; the sequence is MIYQMQMPEK…EHVSLFANFS (231 aa). An alpha C-terminal domain (alpha-CTD) region spans residues 252–328; it reads MRKMLLTRIE…MDITKYQMKG (77 aa).

Belongs to the RNA polymerase alpha chain family. Homodimer. The RNAP catalytic core consists of 2 alpha, 1 beta, 1 beta' and 1 omega subunit. When a sigma factor is associated with the core the holoenzyme is formed, which can initiate transcription.

It carries out the reaction RNA(n) + a ribonucleoside 5'-triphosphate = RNA(n+1) + diphosphate. Functionally, DNA-dependent RNA polymerase catalyzes the transcription of DNA into RNA using the four ribonucleoside triphosphates as substrates. The chain is DNA-directed RNA polymerase subunit alpha from Chlorobium phaeobacteroides (strain BS1).